Here is a 254-residue protein sequence, read N- to C-terminus: Aspartate/glutamate leucyltransferase (254 aa).

This sequence belongs to the R-transferase family. Bpt subfamily.

The protein localises to the cytoplasm. The enzyme catalyses N-terminal L-glutamyl-[protein] + L-leucyl-tRNA(Leu) = N-terminal L-leucyl-L-glutamyl-[protein] + tRNA(Leu) + H(+). The catalysed reaction is N-terminal L-aspartyl-[protein] + L-leucyl-tRNA(Leu) = N-terminal L-leucyl-L-aspartyl-[protein] + tRNA(Leu) + H(+). Functions in the N-end rule pathway of protein degradation where it conjugates Leu from its aminoacyl-tRNA to the N-termini of proteins containing an N-terminal aspartate or glutamate. This Xylella fastidiosa (strain M23) protein is Aspartate/glutamate leucyltransferase.